A 665-amino-acid chain; its full sequence is Lamin-A (665 aa).

Residue M1 is modified to N-acetylmethionine. Residues 1–29 form a head region; it reads METPGQKRATRSTHTPLSPTRITRLQEKE. The residue at position 18 (S18) is a Phosphoserine. The region spanning 27–383 is the IF rod domain; sequence EKEDLQGLND…KLLEGEEERL (357 aa). The coil 1A stretch occupies residues 30–66; the sequence is DLQGLNDRLAVYIDKVRSLELENARLRLRITESEDVI. Residues 67-76 are linker 1; that stretch reads SREVTGIKSA. The segment at 77 to 214 is coil 1B; that stretch reads YETELADARK…SIYNEEMRET (138 aa). Positions 215 to 238 are linker 2; that stretch reads KRRHETRLVEVDNGRQREFESKLA. Residues 239–383 form a coil 2 region; it reads DALHELRAQH…KLLEGEEERL (145 aa). Disordered regions lie at residues 381-441, 550-581, and 602-641; these read ERLR…SVEE, DDEDNDDMEHHHHHHHHHHDGQNSSGDPGEYN, and ASQGSGLVTGSSGSSSSSVTLTRTYRSTGGTSGGSGLGES. The tail stretch occupies residues 384 to 664; that stretch reads RLSPSPNTQK…AQVAPQNCSI (281 aa). S388 is modified (phosphoserine). Positions 399–411 are enriched in low complexity; it reads IASHSGAHISSSA. A Nuclear localization signal motif is present at residues 413–418; sequence KRRRLE. The LTD domain maps to 425-542; it reads SSFTQHARTT…EEVAMRKLVR (118 aa). Polar residues predominate over residues 427 to 436; it reads FTQHARTTGK. Residues 605 to 630 show a composition bias toward low complexity; it reads GSGLVTGSSGSSSSSVTLTRTYRSTG. C662 is modified (cysteine methyl ester). C662 carries S-farnesyl cysteine lipidation. The propeptide at 663–665 is removed in mature form; the sequence is SIM.

This sequence belongs to the intermediate filament family. In terms of assembly, homodimer. Lamin dimers then assemble into dimeric head-to-tail polymers. Ultimately, two head-to-tail polymers assemble laterally into a protofilament with a uniformly shaped rod of 3.5 nm in diameter. In terms of processing, phosphorylation plays a key role in lamin organization, subcellular localization and nuclear envelope disintegration. Phosphorylation by CDK1 at Ser-18 at the onset of mitosis drives lamin disassembly and nuclear envelope breakdown.

Its subcellular location is the nucleus lamina. The protein resides in the nucleus envelope. It is found in the nucleus. The protein localises to the nucleoplasm. It localises to the nucleus matrix. Lamins are intermediate filament proteins that assemble into a filamentous meshwork, and which constitute the major components of the nuclear lamina, a fibrous layer on the nucleoplasmic side of the inner nuclear membrane. Lamins provide a framework for the nuclear envelope, bridging the nuclear envelope and chromatin, thereby playing an important role in nuclear assembly, chromatin organization, nuclear membrane and telomere dynamics. The structural integrity of the lamina is strictly controlled by the cell cycle, as seen by the disintegration and formation of the nuclear envelope in prophase and telophase, respectively. In Xenopus laevis (African clawed frog), this protein is Lamin-A (lmna).